The following is a 388-amino-acid chain: Pyruvate dehydrogenase E1 component subunit alpha, testis-specific form, mitochondrial (388 aa).

Residues 1 to 27 (MLAAFISRVLRRVAQKSARRVLVASRN) constitute a mitochondrion transit peptide. Pyruvate is bound by residues histidine 90, tyrosine 116, arginine 117, glycine 163, valine 165, aspartate 194, glycine 195, alanine 196, asparagine 223, and tyrosine 225. Tyrosine 116, arginine 117, glycine 163, valine 165, aspartate 194, glycine 195, alanine 196, and asparagine 223 together coordinate thiamine diphosphate. Aspartate 194 is a Mg(2+) binding site. Residues asparagine 223 and tyrosine 225 each contribute to the Mg(2+) site. Histidine 290 is a binding site for thiamine diphosphate. Position 291 is a phosphoserine; by PDK1, PDK2, PDK3 and PDK4 (serine 291). Position 293 is a phosphoserine (serine 293). Phosphoserine; by PDK3 is present on serine 298.

Heterotetramer of two PDHA2 and two PDHB subunits. The heterotetramer interacts with DLAT, and is part of the multimeric pyruvate dehydrogenase complex that contains multiple copies of pyruvate dehydrogenase (E1), dihydrolipoamide acetyltransferase (DLAT, E2) and lipoamide dehydrogenase (DLD, E3). These subunits are bound to an inner core composed of about 48 DLAT and 12 PDHX molecules. Thiamine diphosphate serves as cofactor. Mg(2+) is required as a cofactor. In terms of processing, phosphorylation at Ser-291, Ser-293 and Ser-298 by PDK family kinases inactivates the enzyme; for this phosphorylation at a single site is sufficient. Phosphorylation at Ser-293 interferes with access to active site, and thereby inactivates the enzyme. Dephosphorylation at all three sites, i.e. at Ser-291, Ser-293 and Ser-298, is required for reactivation. In terms of tissue distribution, testis. Expressed in postmeiotic spermatogenic cells.

It is found in the mitochondrion matrix. The catalysed reaction is N(6)-[(R)-lipoyl]-L-lysyl-[protein] + pyruvate + H(+) = N(6)-[(R)-S(8)-acetyldihydrolipoyl]-L-lysyl-[protein] + CO2. Its activity is regulated as follows. Pyruvate dehydrogenase activity is inhibited by phosphorylation of PDHA2; it is reactivated by dephosphorylation. In terms of biological role, the pyruvate dehydrogenase complex catalyzes the overall conversion of pyruvate to acetyl-CoA and CO(2), and thereby links the glycolytic pathway to the tricarboxylic cycle. The polypeptide is Pyruvate dehydrogenase E1 component subunit alpha, testis-specific form, mitochondrial (PDHA2) (Homo sapiens (Human)).